A 233-amino-acid polypeptide reads, in one-letter code: Phosphoribosylformylglycinamidine synthase subunit PurQ (233 aa).

One can recognise a Glutamine amidotransferase type-1 domain in the interval 3 to 233 (SAVLVFPGIN…GLVAHLERAA (231 aa)). Cys-87 acts as the Nucleophile in catalysis. Catalysis depends on residues His-204 and Glu-206.

As to quaternary structure, part of the FGAM synthase complex composed of 1 PurL, 1 PurQ and 2 PurS subunits.

It is found in the cytoplasm. The enzyme catalyses N(2)-formyl-N(1)-(5-phospho-beta-D-ribosyl)glycinamide + L-glutamine + ATP + H2O = 2-formamido-N(1)-(5-O-phospho-beta-D-ribosyl)acetamidine + L-glutamate + ADP + phosphate + H(+). It carries out the reaction L-glutamine + H2O = L-glutamate + NH4(+). The protein operates within purine metabolism; IMP biosynthesis via de novo pathway; 5-amino-1-(5-phospho-D-ribosyl)imidazole from N(2)-formyl-N(1)-(5-phospho-D-ribosyl)glycinamide: step 1/2. In terms of biological role, part of the phosphoribosylformylglycinamidine synthase complex involved in the purines biosynthetic pathway. Catalyzes the ATP-dependent conversion of formylglycinamide ribonucleotide (FGAR) and glutamine to yield formylglycinamidine ribonucleotide (FGAM) and glutamate. The FGAM synthase complex is composed of three subunits. PurQ produces an ammonia molecule by converting glutamine to glutamate. PurL transfers the ammonia molecule to FGAR to form FGAM in an ATP-dependent manner. PurS interacts with PurQ and PurL and is thought to assist in the transfer of the ammonia molecule from PurQ to PurL. This is Phosphoribosylformylglycinamidine synthase subunit PurQ from Nitrobacter winogradskyi (strain ATCC 25391 / DSM 10237 / CIP 104748 / NCIMB 11846 / Nb-255).